A 362-amino-acid chain; its full sequence is Chorismate synthase (362 aa).

The NADP(+) site is built by Arg-48 and Arg-54. FMN-binding positions include 125-127 (RSS), 237-238 (NA), Gly-277, 292-296 (KPTSS), and Arg-318.

The protein belongs to the chorismate synthase family. As to quaternary structure, homotetramer. It depends on FMNH2 as a cofactor.

It catalyses the reaction 5-O-(1-carboxyvinyl)-3-phosphoshikimate = chorismate + phosphate. It functions in the pathway metabolic intermediate biosynthesis; chorismate biosynthesis; chorismate from D-erythrose 4-phosphate and phosphoenolpyruvate: step 7/7. Catalyzes the anti-1,4-elimination of the C-3 phosphate and the C-6 proR hydrogen from 5-enolpyruvylshikimate-3-phosphate (EPSP) to yield chorismate, which is the branch point compound that serves as the starting substrate for the three terminal pathways of aromatic amino acid biosynthesis. This reaction introduces a second double bond into the aromatic ring system. In Idiomarina loihiensis (strain ATCC BAA-735 / DSM 15497 / L2-TR), this protein is Chorismate synthase.